The primary structure comprises 456 residues: Taurine--pyruvate aminotransferase (456 aa).

Lys-280 carries the post-translational modification N6-(pyridoxal phosphate)lysine.

It belongs to the class-III pyridoxal-phosphate-dependent aminotransferase family. In terms of assembly, homotetramer. It depends on pyridoxal 5'-phosphate as a cofactor.

It catalyses the reaction taurine + pyruvate = sulfoacetaldehyde + L-alanine. It participates in organosulfur degradation; alkanesulfonate degradation. In terms of biological role, involved in an anaerobic respiration pathway that converts the sulfonate taurine (2-aminoethanesulfonate) to ammonia, acetate and sulfide. Catalyzes the initial metabolic reaction of anaerobic taurine degradation, i.e. the transamination reaction between taurine and pyruvate leading to sulfoacetaldehyde and alanine. The chain is Taurine--pyruvate aminotransferase from Bilophila wadsworthia (strain 3_1_6).